The sequence spans 486 residues: MTEQAKWNFDNSYARLPQPFFARLKPNPVRSPKLVLFNEPLATALGLNGEALQQPEGVAVLAGNVIPEGGEALAQAYAGHQFGHFTMLGDGRALLIGEQITPDGNRFDIQLKGSGRTPFSRGGDGRAALGPMLREFLISEAMHALGIPTTRSLAVVTTGEEIWRETELPGAVLTRVAESHLRVGTFQYAAGRGEVNDVKTLADYAIKRHYPELAESENPYLSLLEQVITRQANLISQWQLVGFVHGVMNTDNMTISGETIDYGPCAFMDTYDPATVFSSIDTQGRYAYGNQPQIANWNLARFAETLVPLLAEDETKGVEMAQSAIEGFKGQYVSNWLAGIRKKLGLFNAEDGDKDFVEKLLRLMHEHEADYTNTFRLLTLGQPEKTAMNGAAEFSEWLEQWQQRQSRQAQTKDEAMKLMRTNNPAVIPRNHRVEEALAAAVDEEDDSLVKQLIAVLKEPYAYSEEQERYAEVPERCQHGYVTYCGT.

8 residues coordinate ATP: Gly-89, Gly-91, Arg-92, Lys-112, Asp-124, Gly-125, Arg-175, and Arg-182. The Proton acceptor role is filled by Asp-251. Mg(2+) is bound by residues Asn-252 and Asp-261. Position 261 (Asp-261) interacts with ATP.

The protein belongs to the SELO family. It depends on Mg(2+) as a cofactor. Mn(2+) is required as a cofactor.

It catalyses the reaction L-seryl-[protein] + ATP = 3-O-(5'-adenylyl)-L-seryl-[protein] + diphosphate. The catalysed reaction is L-threonyl-[protein] + ATP = 3-O-(5'-adenylyl)-L-threonyl-[protein] + diphosphate. It carries out the reaction L-tyrosyl-[protein] + ATP = O-(5'-adenylyl)-L-tyrosyl-[protein] + diphosphate. The enzyme catalyses L-histidyl-[protein] + UTP = N(tele)-(5'-uridylyl)-L-histidyl-[protein] + diphosphate. It catalyses the reaction L-seryl-[protein] + UTP = O-(5'-uridylyl)-L-seryl-[protein] + diphosphate. The catalysed reaction is L-tyrosyl-[protein] + UTP = O-(5'-uridylyl)-L-tyrosyl-[protein] + diphosphate. In terms of biological role, nucleotidyltransferase involved in the post-translational modification of proteins. It can catalyze the addition of adenosine monophosphate (AMP) or uridine monophosphate (UMP) to a protein, resulting in modifications known as AMPylation and UMPylation. This chain is Protein nucleotidyltransferase YdiU, found in Shouchella clausii (strain KSM-K16) (Alkalihalobacillus clausii).